Consider the following 206-residue polypeptide: Thymidylate kinase (206 aa).

ATP is bound at residue 11–18 (GIDGAGKT).

Belongs to the thymidylate kinase family.

The enzyme catalyses dTMP + ATP = dTDP + ADP. Functionally, phosphorylation of dTMP to form dTDP in both de novo and salvage pathways of dTTP synthesis. The sequence is that of Thymidylate kinase from Burkholderia cenocepacia (strain HI2424).